The following is a 290-amino-acid chain: MRIADYSVTKAVLERHGFTFKKSFGQNFLTDTNILQKIVNTAEINKNVNVIEIGPGIGALTEFLAENASEVMAFEIDERLVPILEDTLRDHDNVKVINEDVLKADLQTRVKEFENPDLPIKVVANLPYYITTPILMHLIESKIPFSEFVVMMQKEVADRISAEPNTKAYGSLSIAVQYYMTTKVAFAVPRTVFVPAPNVDSAILKMTRRKQPLVEVKDEDFFFRVSKASFLHRRKTLWNNLTSHFGKSEEVKNKLDQALENAAIKPSIRGEALSISDFARLSDALREAGL.

S-adenosyl-L-methionine contacts are provided by Asn-27, Leu-29, Gly-54, Glu-75, Asp-100, and Asn-125.

The protein belongs to the class I-like SAM-binding methyltransferase superfamily. rRNA adenine N(6)-methyltransferase family. RsmA subfamily.

Its subcellular location is the cytoplasm. It catalyses the reaction adenosine(1518)/adenosine(1519) in 16S rRNA + 4 S-adenosyl-L-methionine = N(6)-dimethyladenosine(1518)/N(6)-dimethyladenosine(1519) in 16S rRNA + 4 S-adenosyl-L-homocysteine + 4 H(+). Specifically dimethylates two adjacent adenosines (A1518 and A1519) in the loop of a conserved hairpin near the 3'-end of 16S rRNA in the 30S particle. May play a critical role in biogenesis of 30S subunits. This chain is Ribosomal RNA small subunit methyltransferase A, found in Streptococcus thermophilus (strain ATCC BAA-491 / LMD-9).